We begin with the raw amino-acid sequence, 331 residues long: GTP 3',8-cyclase 2 (331 aa).

The region spanning 9 to 234 (PFGRRITYLR…PSLARSGGPS (226 aa)) is the Radical SAM core domain. R18 is a binding site for GTP. C25 and C29 together coordinate [4Fe-4S] cluster. Y31 provides a ligand contact to S-adenosyl-L-methionine. C32 provides a ligand contact to [4Fe-4S] cluster. R67 contributes to the GTP binding site. S-adenosyl-L-methionine is bound at residue G71. T98 lines the GTP pocket. An S-adenosyl-L-methionine-binding site is contributed by S122. Residue K159 coordinates GTP. M193 serves as a coordination point for S-adenosyl-L-methionine. [4Fe-4S] cluster-binding residues include C257 and C260. A GTP-binding site is contributed by 262-264 (RVR). Position 274 (C274) interacts with [4Fe-4S] cluster.

This sequence belongs to the radical SAM superfamily. MoaA family. Monomer and homodimer. [4Fe-4S] cluster serves as cofactor.

The catalysed reaction is GTP + AH2 + S-adenosyl-L-methionine = (8S)-3',8-cyclo-7,8-dihydroguanosine 5'-triphosphate + 5'-deoxyadenosine + L-methionine + A + H(+). It participates in cofactor biosynthesis; molybdopterin biosynthesis. In terms of biological role, catalyzes the cyclization of GTP to (8S)-3',8-cyclo-7,8-dihydroguanosine 5'-triphosphate. In Pseudomonas aeruginosa (strain ATCC 15692 / DSM 22644 / CIP 104116 / JCM 14847 / LMG 12228 / 1C / PRS 101 / PAO1), this protein is GTP 3',8-cyclase 2 (moaA2).